A 348-amino-acid chain; its full sequence is Uroporphyrinogen decarboxylase (348 aa).

Substrate-binding positions include 29–33 (RQAGR), D79, Y155, T210, and H326.

The protein belongs to the uroporphyrinogen decarboxylase family. As to quaternary structure, homodimer.

Its subcellular location is the cytoplasm. The enzyme catalyses uroporphyrinogen III + 4 H(+) = coproporphyrinogen III + 4 CO2. It participates in porphyrin-containing compound metabolism; protoporphyrin-IX biosynthesis; coproporphyrinogen-III from 5-aminolevulinate: step 4/4. In terms of biological role, catalyzes the decarboxylation of four acetate groups of uroporphyrinogen-III to yield coproporphyrinogen-III. This Rhodospirillum rubrum (strain ATCC 11170 / ATH 1.1.1 / DSM 467 / LMG 4362 / NCIMB 8255 / S1) protein is Uroporphyrinogen decarboxylase.